Consider the following 114-residue polypeptide: As-peptide 126 (114 aa).

Positions 1-22 (MSRALICSLALLAMLVISGTYA) are cleaved as a signal peptide. 9 tandem repeats follow at residues 22 to 29 (ASPAANAE), 30 to 37 (ALAAANAE), 38 to 45 (ASAAANAE), 46 to 53 (PLAAANAE), 54 to 61 (PLAAANAE), 62 to 69 (PLAAANAD), 70 to 77 (PIAAANAE), 78 to 85 (PSAAANAE), and 86 to 93 (PLAAANAE). Residues 22–93 (ASPAANAEAL…AEPLAAANAE (72 aa)) are 9 X 8 AA approximate tandem repeats of [AP]-[ILS]-[AP]-A-A-N-A-[DE]. The propeptide occupies 23 to 104 (SPAANAEALA…SAGPSPLAAA (82 aa)). The span at 82 to 96 (ANAEPLAAANAEPSA) shows a compositional bias: low complexity. The interval 82 to 114 (ANAEPLAAANAEPSAGPSPLAAAQDPPVVKMKG) is disordered. At Gln-105 the chain carries Pyrrolidone carboxylic acid. Lys-113 carries the post-translational modification Lysine amide.

In terms of tissue distribution, expressed by the venom gland.

It is found in the secreted. In Anoplius samariensis (Solitary wasp), this protein is As-peptide 126.